We begin with the raw amino-acid sequence, 123 residues long: Large ribosomal subunit protein bL12 (123 aa).

This sequence belongs to the bacterial ribosomal protein bL12 family. Homodimer. Part of the ribosomal stalk of the 50S ribosomal subunit. Forms a multimeric L10(L12)X complex, where L10 forms an elongated spine to which 2 to 4 L12 dimers bind in a sequential fashion. Binds GTP-bound translation factors.

Forms part of the ribosomal stalk which helps the ribosome interact with GTP-bound translation factors. Is thus essential for accurate translation. The protein is Large ribosomal subunit protein bL12 of Psychrobacter arcticus (strain DSM 17307 / VKM B-2377 / 273-4).